Reading from the N-terminus, the 207-residue chain is Dephospho-CoA kinase (207 aa).

The region spanning 10–207 is the DPCK domain; it reads ILGLTGGIGS…FYLTLRGGQP (198 aa). 18–23 contacts ATP; it reads GSGKSA.

This sequence belongs to the CoaE family.

It localises to the cytoplasm. It catalyses the reaction 3'-dephospho-CoA + ATP = ADP + CoA + H(+). The protein operates within cofactor biosynthesis; coenzyme A biosynthesis; CoA from (R)-pantothenate: step 5/5. In terms of biological role, catalyzes the phosphorylation of the 3'-hydroxyl group of dephosphocoenzyme A to form coenzyme A. This is Dephospho-CoA kinase from Pseudomonas putida (Arthrobacter siderocapsulatus).